Consider the following 128-residue polypeptide: L-ectoine synthase (128 aa).

Belongs to the ectoine synthase family.

The enzyme catalyses (2S)-4-acetamido-2-aminobutanoate = L-ectoine + H2O. It participates in amine and polyamine biosynthesis; ectoine biosynthesis; L-ectoine from L-aspartate 4-semialdehyde: step 3/3. Its function is as follows. Catalyzes the circularization of gamma-N-acetyl-alpha,gamma-diaminobutyric acid (ADABA) to ectoine (1,4,5,6-tetrahydro-2-methyl-4-pyrimidine carboxylic acid), which is an excellent osmoprotectant. The polypeptide is L-ectoine synthase (Oceanobacillus iheyensis (strain DSM 14371 / CIP 107618 / JCM 11309 / KCTC 3954 / HTE831)).